The sequence spans 556 residues: Dihydroxy-acid dehydratase (556 aa).

Asp-78 contacts Mg(2+). Cys-119 is a binding site for [2Fe-2S] cluster. 2 residues coordinate Mg(2+): Asp-120 and Lys-121. An N6-carboxylysine modification is found at Lys-121. Cys-195 lines the [2Fe-2S] cluster pocket. Glu-446 serves as a coordination point for Mg(2+). The Proton acceptor role is filled by Ser-472.

This sequence belongs to the IlvD/Edd family. Homodimer. Requires [2Fe-2S] cluster as cofactor. Mg(2+) is required as a cofactor.

The catalysed reaction is (2R)-2,3-dihydroxy-3-methylbutanoate = 3-methyl-2-oxobutanoate + H2O. It catalyses the reaction (2R,3R)-2,3-dihydroxy-3-methylpentanoate = (S)-3-methyl-2-oxopentanoate + H2O. The protein operates within amino-acid biosynthesis; L-isoleucine biosynthesis; L-isoleucine from 2-oxobutanoate: step 3/4. It functions in the pathway amino-acid biosynthesis; L-valine biosynthesis; L-valine from pyruvate: step 3/4. Functionally, functions in the biosynthesis of branched-chain amino acids. Catalyzes the dehydration of (2R,3R)-2,3-dihydroxy-3-methylpentanoate (2,3-dihydroxy-3-methylvalerate) into 2-oxo-3-methylpentanoate (2-oxo-3-methylvalerate) and of (2R)-2,3-dihydroxy-3-methylbutanoate (2,3-dihydroxyisovalerate) into 2-oxo-3-methylbutanoate (2-oxoisovalerate), the penultimate precursor to L-isoleucine and L-valine, respectively. This Desulfatibacillum aliphaticivorans protein is Dihydroxy-acid dehydratase.